A 647-amino-acid chain; its full sequence is DNA mismatch repair protein MutL (647 aa).

Disordered stretches follow at residues Glu-356 to Ser-391 and Pro-407 to Pro-428. Positions Leu-413–Ser-423 are enriched in polar residues.

This sequence belongs to the DNA mismatch repair MutL/HexB family.

This protein is involved in the repair of mismatches in DNA. It is required for dam-dependent methyl-directed DNA mismatch repair. May act as a 'molecular matchmaker', a protein that promotes the formation of a stable complex between two or more DNA-binding proteins in an ATP-dependent manner without itself being part of a final effector complex. The sequence is that of DNA mismatch repair protein MutL from Citrifermentans bemidjiense (strain ATCC BAA-1014 / DSM 16622 / JCM 12645 / Bem) (Geobacter bemidjiensis).